The following is a 432-amino-acid chain: Phosphoprotein associated with glycosphingolipid-enriched microdomains 1 (432 aa).

Residues 1-16 are Extracellular-facing; sequence MGPAGSLLGSGQMQIT. Residues 17–37 traverse the membrane as a helical; Signal-anchor for type III membrane protein segment; sequence LWGSLAAVAIFFVITFLIFLC. 2 S-palmitoyl cysteine lipidation sites follow: Cys-37 and Cys-40. The Cytoplasmic portion of the chain corresponds to 38–432; sequence SSCDREKKPR…LQQGRDITRL (395 aa). Residues Ser-50 and Ser-61 each carry the phosphoserine modification. Tyr-105 bears the Phosphotyrosine; by LYN mark. The span at 110–122 shows a compositional bias: polar residues; that stretch reads TSASDLLDSQDST. A disordered region spans residues 110–137; the sequence is TSASDLLDSQDSTGKPKCHQSRELPRIP. Residues Tyr-163, Tyr-181, and Tyr-227 each carry the phosphotyrosine modification. Disordered regions lie at residues 197 to 230 and 244 to 432; these read EKGH…YASV and SILG…ITRL. Over residues 220–230 the composition is skewed to basic and acidic residues; the sequence is GKAEFAEYASV. Ser-229 bears the Phosphoserine mark. The span at 316–356 shows a compositional bias: polar residues; that stretch reads MYSSVNKPGQLVNKSGQSLTVPESTYTSIQGDPQRSPSSCN. Phosphotyrosine; by FYN and LYN is present on Tyr-317. The interaction with CSK stretch occupies residues 317–320; that stretch reads YSSV. Ser-354 carries the phosphoserine modification. Tyr-359 is modified (phosphotyrosine). Ser-380 is modified (phosphoserine). Residues Tyr-387 and Tyr-417 each carry the phosphotyrosine modification. The segment at 430–432 is interaction with NHERF1; that stretch reads TRL.

In terms of assembly, interacts with FYN. When phosphorylated, interacts with CSK. Interacts with NHERF1/EBP50. In resting T-cells, part of a PAG1-NHERF1-MSN complex which is disrupted upon TCR activation. Interacts with LYN on plasma membrane lipid rafts. Identified in a complex with LYN and STAT3. In terms of processing, palmitoylated. Post-translationally, phosphorylated by FYN on Tyr-317 in resting T-cells; which promotes interaction with CSK. Dephosphorylated by PTPRC/CD45 upon TCR activation; which leads to CSK dissociation. May also be dephosphorylated by PTPN11. Hyperphosphorylated in mast cells upon FCER1 activation. Phosphorylated by LYN. As to expression, ubiquitously expressed. Present in germinal center B-cells, plasma cells, T-cells, monocytes and platelets (at protein level).

Its subcellular location is the cell membrane. Negatively regulates TCR (T-cell antigen receptor)-mediated signaling in T-cells and FCER1 (high affinity immunoglobulin epsilon receptor)-mediated signaling in mast cells. Promotes CSK activation and recruitment to lipid rafts, which results in LCK inhibition. Inhibits immunological synapse formation by preventing dynamic arrangement of lipid raft proteins. May be involved in cell adhesion signaling. In Homo sapiens (Human), this protein is Phosphoprotein associated with glycosphingolipid-enriched microdomains 1 (PAG1).